We begin with the raw amino-acid sequence, 191 residues long: Probable DNA-directed RNA polymerase subunit delta (191 aa).

One can recognise an HTH HARE-type domain in the interval 14 to 83; the sequence is LSMIEVARAI…GENKWGLRSW (70 aa). The interval 119–191 is disordered; sequence EDAIDYRDDD…EDEEDEEPVL (73 aa).

In terms of assembly, RNAP is composed of a core of 2 alpha, a beta and a beta' subunits. The core is associated with a delta subunit and one of several sigma factors.

Participates in both the initiation and recycling phases of transcription. In the presence of the delta subunit, RNAP displays an increased specificity of transcription, a decreased affinity for nucleic acids, and an increased efficiency of RNA synthesis because of enhanced recycling. In Streptococcus pyogenes serotype M6 (strain ATCC BAA-946 / MGAS10394), this protein is Probable DNA-directed RNA polymerase subunit delta.